A 166-amino-acid chain; its full sequence is NAD(P)H-quinone oxidoreductase subunit I, chloroplastic (166 aa).

4Fe-4S ferredoxin-type domains are found at residues 55 to 84 (GRIH…VDWK) and 95 to 124 (LNYS…MTEE). [4Fe-4S] cluster is bound by residues C64, C67, C70, C74, C104, C107, C110, and C114.

This sequence belongs to the complex I 23 kDa subunit family. In terms of assembly, NDH is composed of at least 16 different subunits, 5 of which are encoded in the nucleus. Requires [4Fe-4S] cluster as cofactor.

It is found in the plastid. The protein localises to the chloroplast thylakoid membrane. It catalyses the reaction a plastoquinone + NADH + (n+1) H(+)(in) = a plastoquinol + NAD(+) + n H(+)(out). It carries out the reaction a plastoquinone + NADPH + (n+1) H(+)(in) = a plastoquinol + NADP(+) + n H(+)(out). NDH shuttles electrons from NAD(P)H:plastoquinone, via FMN and iron-sulfur (Fe-S) centers, to quinones in the photosynthetic chain and possibly in a chloroplast respiratory chain. The immediate electron acceptor for the enzyme in this species is believed to be plastoquinone. Couples the redox reaction to proton translocation, and thus conserves the redox energy in a proton gradient. The chain is NAD(P)H-quinone oxidoreductase subunit I, chloroplastic from Parthenium hysterophorus (Santa Maria feverfew).